Here is a 522-residue protein sequence, read N- to C-terminus: Thiamine biosynthetic bifunctional enzyme TH1, chloroplastic (522 aa).

The N-terminal 36 residues, 1–36 (MNSLGGIRSWPANWRSTTASMTTTESVRKVPQVLTV), are a transit peptide targeting the chloroplast. 4-amino-2-methyl-5-(diphosphooxymethyl)pyrimidine is bound by residues 345–349 (QLREK) and asparagine 377. Residues aspartate 378 and aspartate 397 each contribute to the Mg(2+) site. 4-amino-2-methyl-5-(diphosphooxymethyl)pyrimidine is bound at residue serine 416. 442–444 (TNT) contributes to the 2-[(2R,5Z)-2-carboxy-4-methylthiazol-5(2H)-ylidene]ethyl phosphate binding site. Lysine 445 is a 4-amino-2-methyl-5-(diphosphooxymethyl)pyrimidine binding site. 2-[(2R,5Z)-2-carboxy-4-methylthiazol-5(2H)-ylidene]ethyl phosphate is bound by residues glycine 472 and 495–496 (VS).

It belongs to the thiamine-phosphate synthase family. Requires Mg(2+) as cofactor.

The protein resides in the plastid. The protein localises to the chloroplast. It carries out the reaction 2-[(2R,5Z)-2-carboxy-4-methylthiazol-5(2H)-ylidene]ethyl phosphate + 4-amino-2-methyl-5-(diphosphooxymethyl)pyrimidine + 2 H(+) = thiamine phosphate + CO2 + diphosphate. The enzyme catalyses 2-(2-carboxy-4-methylthiazol-5-yl)ethyl phosphate + 4-amino-2-methyl-5-(diphosphooxymethyl)pyrimidine + 2 H(+) = thiamine phosphate + CO2 + diphosphate. The catalysed reaction is 4-methyl-5-(2-phosphooxyethyl)-thiazole + 4-amino-2-methyl-5-(diphosphooxymethyl)pyrimidine + H(+) = thiamine phosphate + diphosphate. It catalyses the reaction 4-amino-5-hydroxymethyl-2-methylpyrimidine + ATP = 4-amino-2-methyl-5-(phosphooxymethyl)pyrimidine + ADP + H(+). It functions in the pathway cofactor biosynthesis; thiamine diphosphate biosynthesis; thiamine phosphate from 4-amino-2-methyl-5-diphosphomethylpyrimidine and 4-methyl-5-(2-phosphoethyl)-thiazole: step 1/1. The protein operates within cofactor biosynthesis; thiamine diphosphate biosynthesis; 4-amino-2-methyl-5-diphosphomethylpyrimidine from 5-amino-1-(5-phospho-D-ribosyl)imidazole: step 2/3. Functionally, essential for thiamine biosynthesis. Bifunctional enzyme that catalyzes the phosphorylation of hydroxymethylpyrimidine phosphate (HMP-P) to HMP-PP and condenses 4-methyl-5-(beta-hydroxyethyl)thiazole monophosphate (THZ-P) and 2-methyl-4-amino-5-hydroxymethyl pyrimidine pyrophosphate (HMP-PP) to form thiamine monophosphate (TMP). In Arabidopsis thaliana (Mouse-ear cress), this protein is Thiamine biosynthetic bifunctional enzyme TH1, chloroplastic (TH1).